A 1093-amino-acid polypeptide reads, in one-letter code: Receptor-mediated endocytosis protein 6 (1093 aa).

Positions 156-389 constitute a Ras-GAP domain; the sequence is LKIAQVVCNL…EMMDALLVEK (234 aa). Disordered regions lie at residues 547–610 and 643–669; these read DLEK…GGEQ and RSGS…DVAT. Polar residues-rich tracts occupy residues 568–577 and 584–598; these read IDFSSGSAET and DSTS…STEE. Positions 955-1093 constitute a VPS9 domain; the sequence is HHRDKLLRGT…SAVEYIKTIL (139 aa).

This sequence belongs to the GAPVD1 family. Interacts with GDP-bound rab-5. Interacts with alpha-adaptin.

Its subcellular location is the membrane. The protein localises to the cytoplasmic vesicle. It is found in the clathrin-coated vesicle. Acts both as a GTPase-activating protein (GAP) and a guanine nucleotide exchange factor (GEF), and participates in endocytosis. Acts by regulating the activation of rab-5 by exchanging bound GDP for free GTP at clathrin coated pits. The chain is Receptor-mediated endocytosis protein 6 (rme-6) from Caenorhabditis elegans.